Consider the following 154-residue polypeptide: Myoglobin (154 aa).

A Globin domain is found at 2 to 148 (GLSDGEWQLV…FRNDIAAKYK (147 aa)). A Phosphoserine modification is found at serine 4. Residue histidine 65 coordinates nitrite. Histidine 65 contributes to the O2 binding site. Threonine 68 is subject to Phosphothreonine. Histidine 94 is a binding site for heme b.

The protein belongs to the globin family. In terms of assembly, monomeric.

Its subcellular location is the cytoplasm. It localises to the sarcoplasm. The enzyme catalyses Fe(III)-heme b-[protein] + nitric oxide + H2O = Fe(II)-heme b-[protein] + nitrite + 2 H(+). It carries out the reaction H2O2 + AH2 = A + 2 H2O. Its function is as follows. Monomeric heme protein which primary function is to store oxygen and facilitate its diffusion within muscle tissues. Reversibly binds oxygen through a pentacoordinated heme iron and enables its timely and efficient release as needed during periods of heightened demand. Depending on the oxidative conditions of tissues and cells, and in addition to its ability to bind oxygen, it also has a nitrite reductase activity whereby it regulates the production of bioactive nitric oxide. Under stress conditions, like hypoxia and anoxia, it also protects cells against reactive oxygen species thanks to its pseudoperoxidase activity. The protein is Myoglobin (MB) of Erinaceus europaeus (Western European hedgehog).